The following is a 332-amino-acid chain: Cyclin-dependent kinase 1 (332 aa).

A Protein kinase domain is found at 22 to 312; the sequence is FTKLEKIGEG…AKKALVHPYF (291 aa). Residues 28–36 and lysine 51 contribute to the ATP site; that span reads IGEGTYGVV. Threonine 32 carries the phosphothreonine modification. Position 33 is a phosphotyrosine (tyrosine 33). Aspartate 146 functions as the Proton acceptor in the catalytic mechanism.

It belongs to the protein kinase superfamily. CMGC Ser/Thr protein kinase family. CDC2/CDKX subfamily. In terms of assembly, forms a stable but non-covalent complex with a regulatory subunit and with a cyclin. Interacts with cks-1. Phosphorylated.

The protein resides in the nucleus. The protein localises to the cytoplasm. Its subcellular location is the cytoskeleton. It is found in the microtubule organizing center. It localises to the centrosome. The protein resides in the chromosome. It carries out the reaction L-seryl-[protein] + ATP = O-phospho-L-seryl-[protein] + ADP + H(+). The enzyme catalyses L-threonyl-[protein] + ATP = O-phospho-L-threonyl-[protein] + ADP + H(+). It catalyses the reaction [DNA-directed RNA polymerase] + ATP = phospho-[DNA-directed RNA polymerase] + ADP + H(+). Phosphorylation both activates and inactivates the enzyme depending on the site of phosphorylation. Plays a key role in the control of the eukaryotic cell cycle. Required for entry into S-phase and mitosis. Acts as a component of the kinase complex that phosphorylates the repetitive C-terminus of RNA polymerase II. May function in concert with npp-16 to arrest prophase blastomeres in response to anoxia. The sequence is that of Cyclin-dependent kinase 1 (cdk-1) from Caenorhabditis elegans.